The following is a 509-amino-acid chain: UDP-N-acetylmuramyl-tripeptide synthetase (509 aa).

UDP-N-acetyl-alpha-D-muramoyl-L-alanyl-D-glutamate is bound at residue Ser-30. 111-117 serves as a coordination point for ATP; that stretch reads GTDGKTT. UDP-N-acetyl-alpha-D-muramoyl-L-alanyl-D-glutamate-binding positions include 155–156, Thr-182, and Arg-192; that span reads ST. Position 224 is an N6-carboxylysine (Lys-224).

This sequence belongs to the MurCDEF family. MurE subfamily. Carboxylation is probably crucial for Mg(2+) binding and, consequently, for the gamma-phosphate positioning of ATP.

It is found in the cytoplasm. It participates in cell wall biogenesis; peptidoglycan biosynthesis. In terms of biological role, catalyzes the addition of an amino acid to the nucleotide precursor UDP-N-acetylmuramoyl-L-alanyl-D-glutamate (UMAG) in the biosynthesis of bacterial cell-wall peptidoglycan. This is UDP-N-acetylmuramyl-tripeptide synthetase from Roseiflexus sp. (strain RS-1).